The chain runs to 93 residues: Cobalt transport protein CbiN (93 aa).

Transmembrane regions (helical) follow at residues 5-25 and 63-83; these read LMLL…NHGG and LLFT…LGYC.

This sequence belongs to the CbiN family. In terms of assembly, forms an energy-coupling factor (ECF) transporter complex composed of an ATP-binding protein (A component, CbiO), a transmembrane protein (T component, CbiQ) and 2 possible substrate-capture proteins (S components, CbiM and CbiN) of unknown stoichimetry.

It localises to the cell inner membrane. Its pathway is cofactor biosynthesis; adenosylcobalamin biosynthesis. Its function is as follows. Part of the energy-coupling factor (ECF) transporter complex CbiMNOQ involved in cobalt import. The sequence is that of Cobalt transport protein CbiN from Salmonella newport (strain SL254).